We begin with the raw amino-acid sequence, 276 residues long: Kallikrein-10 (276 aa).

The signal sequence occupies residues 1–30 (MRAPHLHLSAASGARALAKLLPLLMAQLWA). Asn39 is a glycosylation site (N-linked (GlcNAc...) asparagine). The Peptidase S1 domain occupies 47-274 (AYGSPCARGS…YMSWINKVIR (228 aa)). Disulfide bonds link Cys52/Cys162, Cys71/Cys87, Cys169/Cys235, Cys201/Cys215, and Cys225/Cys250. Residues His86 and Asp137 each act as charge relay system in the active site. The active-site Charge relay system is Ser229.

The protein belongs to the peptidase S1 family. Kallikrein subfamily. In terms of tissue distribution, expressed in breast, ovary and prostate.

It is found in the secreted. Functionally, has a tumor-suppressor role for NES1 in breast and prostate cancer. This is Kallikrein-10 (KLK10) from Homo sapiens (Human).